Consider the following 73-residue polypeptide: NADH dehydrogenase [ubiquinone] 1 beta subcomplex subunit 3-B (73 aa).

A helical transmembrane segment spans residues 31–48; that stretch reads ALPGLGIGVAAFCVYLVG.

The protein belongs to the complex I NDUFB3 subunit family. As to quaternary structure, complex I is composed of at least 49 different subunits.

Its subcellular location is the mitochondrion inner membrane. Accessory subunit of the mitochondrial membrane respiratory chain NADH dehydrogenase (Complex I), that is believed not to be involved in catalysis. Complex I functions in the transfer of electrons from NADH to the respiratory chain. The immediate electron acceptor for the enzyme is believed to be ubiquinone. In Arabidopsis thaliana (Mouse-ear cress), this protein is NADH dehydrogenase [ubiquinone] 1 beta subcomplex subunit 3-B.